The chain runs to 297 residues: tRNA(Ile)-lysidine synthase (297 aa).

16 to 21 is a binding site for ATP; that stretch reads SGGSDS.

The protein belongs to the tRNA(Ile)-lysidine synthase family.

Its subcellular location is the cytoplasm. The enzyme catalyses cytidine(34) in tRNA(Ile2) + L-lysine + ATP = lysidine(34) in tRNA(Ile2) + AMP + diphosphate + H(+). In terms of biological role, ligates lysine onto the cytidine present at position 34 of the AUA codon-specific tRNA(Ile) that contains the anticodon CAU, in an ATP-dependent manner. Cytidine is converted to lysidine, thus changing the amino acid specificity of the tRNA from methionine to isoleucine. The protein is tRNA(Ile)-lysidine synthase of Mesomycoplasma hyopneumoniae (strain 232) (Mycoplasma hyopneumoniae).